The chain runs to 572 residues: Urease subunit alpha (572 aa).

A Urease domain is found at 134-572; that stretch reads AGIDSHIHLI…ASMNQRYFFG (439 aa). Positions 139, 141, and 222 each coordinate Ni(2+). An N6-carboxylysine modification is found at Lys222. Position 224 (His224) interacts with substrate. 2 residues coordinate Ni(2+): His251 and His277. His325 acts as the Proton donor in catalysis. Asp365 lines the Ni(2+) pocket.

This sequence belongs to the metallo-dependent hydrolases superfamily. Urease alpha subunit family. As to quaternary structure, heterotrimer of UreA (gamma), UreB (beta) and UreC (alpha) subunits. Three heterotrimers associate to form the active enzyme. It depends on Ni cation as a cofactor. Carboxylation allows a single lysine to coordinate two nickel ions.

It is found in the cytoplasm. It carries out the reaction urea + 2 H2O + H(+) = hydrogencarbonate + 2 NH4(+). Its pathway is nitrogen metabolism; urea degradation; CO(2) and NH(3) from urea (urease route): step 1/1. This Yersinia pseudotuberculosis serotype O:1b (strain IP 31758) protein is Urease subunit alpha.